The following is a 346-amino-acid chain: Phosphoribosylformylglycinamidine cyclo-ligase (346 aa).

It belongs to the AIR synthase family.

It is found in the cytoplasm. It carries out the reaction 2-formamido-N(1)-(5-O-phospho-beta-D-ribosyl)acetamidine + ATP = 5-amino-1-(5-phospho-beta-D-ribosyl)imidazole + ADP + phosphate + H(+). The protein operates within purine metabolism; IMP biosynthesis via de novo pathway; 5-amino-1-(5-phospho-D-ribosyl)imidazole from N(2)-formyl-N(1)-(5-phospho-D-ribosyl)glycinamide: step 2/2. The polypeptide is Phosphoribosylformylglycinamidine cyclo-ligase (Bacillus cereus (strain G9842)).